The following is a 340-amino-acid chain: UDP-3-O-acylglucosamine N-acyltransferase (340 aa).

His-237 acts as the Proton acceptor in catalysis.

Belongs to the transferase hexapeptide repeat family. LpxD subfamily. In terms of assembly, homotrimer.

It catalyses the reaction a UDP-3-O-[(3R)-3-hydroxyacyl]-alpha-D-glucosamine + a (3R)-hydroxyacyl-[ACP] = a UDP-2-N,3-O-bis[(3R)-3-hydroxyacyl]-alpha-D-glucosamine + holo-[ACP] + H(+). It functions in the pathway bacterial outer membrane biogenesis; LPS lipid A biosynthesis. In terms of biological role, catalyzes the N-acylation of UDP-3-O-acylglucosamine using 3-hydroxyacyl-ACP as the acyl donor. Is involved in the biosynthesis of lipid A, a phosphorylated glycolipid that anchors the lipopolysaccharide to the outer membrane of the cell. In Desulfosudis oleivorans (strain DSM 6200 / JCM 39069 / Hxd3) (Desulfococcus oleovorans), this protein is UDP-3-O-acylglucosamine N-acyltransferase.